Here is a 204-residue protein sequence, read N- to C-terminus: Large ribosomal subunit protein bL25 (204 aa).

The protein belongs to the bacterial ribosomal protein bL25 family. CTC subfamily. In terms of assembly, part of the 50S ribosomal subunit; part of the 5S rRNA/L5/L18/L25 subcomplex. Contacts the 5S rRNA. Binds to the 5S rRNA independently of L5 and L18.

Functionally, this is one of the proteins that binds to the 5S RNA in the ribosome where it forms part of the central protuberance. The protein is Large ribosomal subunit protein bL25 of Bordetella bronchiseptica (strain ATCC BAA-588 / NCTC 13252 / RB50) (Alcaligenes bronchisepticus).